The following is a 262-amino-acid chain: MSIDLRASSLDPVQIPGWRWQPFLDEASAALKPFNPSPYPIAETFLQKEGSTGSKAKPVPVTTATWACSTDKLRQVRCACVEAGMAASVLNFVINPSCRFDLPFFGADLVTLPNGHLLALDLQPVDKADPDHTQPVWERLMPLFERWQAELPDGGPIPEEAQPYFSPAFLWTRIPLGEEGDELIERVIRPAFIDYLQLYLNLVAEAEPVSDDRAELLLSGQKRYTAYRAEKDPARGMLTRFYGSEWTESYIHGVLFDLEDAA.

Belongs to the HY2 family.

It carries out the reaction (3Z)-phycoerythrobilin + oxidized 2[4Fe-4S]-[ferredoxin] = 15,16-dihydrobiliverdin + reduced 2[4Fe-4S]-[ferredoxin] + 2 H(+). Its function is as follows. Catalyzes the two-electron reduction of the C2 and C3(1) diene system of 15,16-dihydrobiliverdin. This Parasynechococcus marenigrum (strain WH8102) protein is Phycoerythrobilin:ferredoxin oxidoreductase (pebB).